Consider the following 140-residue polypeptide: Large ribosomal subunit protein uL11 (140 aa).

Belongs to the universal ribosomal protein uL11 family. Part of the ribosomal stalk of the 50S ribosomal subunit. Interacts with L10 and the large rRNA to form the base of the stalk. L10 forms an elongated spine to which L12 dimers bind in a sequential fashion forming a multimeric L10(L12)X complex. One or more lysine residues are methylated.

Forms part of the ribosomal stalk which helps the ribosome interact with GTP-bound translation factors. The protein is Large ribosomal subunit protein uL11 of Staphylococcus saprophyticus subsp. saprophyticus (strain ATCC 15305 / DSM 20229 / NCIMB 8711 / NCTC 7292 / S-41).